The sequence spans 295 residues: Small ribosomal subunit protein uS2 (295 aa).

Residues 242-295 are disordered; that stretch reads APVEPTLARELAPEAPAPEAPAEEAPAAEAAPAAEAAPAAEAAPAEASSEEQAG. A compositionally biased stretch (low complexity) spans 264 to 288; sequence EEAPAAEAAPAAEAAPAAEAAPAEA.

Belongs to the universal ribosomal protein uS2 family.

The chain is Small ribosomal subunit protein uS2 from Phenylobacterium zucineum (strain HLK1).